The chain runs to 469 residues: Citrate synthase, mitochondrial (469 aa).

The transit peptide at 1–30 directs the protein to the mitochondrion; it reads MSFLSVSRLAPKLLNSKNATYFLVAARNAS. Active-site residues include histidine 304 and histidine 350. Arginine 359 is an oxaloacetate binding site. The active site involves aspartate 405. 2 residues coordinate oxaloacetate: arginine 431 and arginine 451.

The protein belongs to the citrate synthase family. In terms of assembly, homodimer.

The protein localises to the mitochondrion matrix. It carries out the reaction oxaloacetate + acetyl-CoA + H2O = citrate + CoA + H(+). It functions in the pathway carbohydrate metabolism; tricarboxylic acid cycle; isocitrate from oxaloacetate: step 1/2. Functionally, key enzyme of the Krebs tricarboxylic acid cycle which catalyzes the synthesis of citrate from acetyl coenzyme A and oxaloacetate. The chain is Citrate synthase, mitochondrial (cs) from Thunnus albacares (Yellowfin tuna).